A 496-amino-acid polypeptide reads, in one-letter code: MNIPFVVETVLHDGLLKYKFKNSKIRSITTKPGKSKGAIFAYRSKKSMIGGRGVVLTSEEAIHENQDTFTHWTPNVYRYGTYADENRSYTKGHSENNLRQINTFFIDFDIHTEKETISASDILTTAIDLGFMPTLIIKSDKGYQAYFVLETPVYVTSKSEFKSVKAAKIISQNIREYFGKSLPVDLTCNHFGIARIPRTDNVEFFDPNYRYSFKEWQDWSFKQTDNKGFTRSSLMVLSGTEGKKQVDEPWFNLLLHETKFSGEKGLVGRNSVMFTLSLAYFSSGYSIETCEYNMFEFNNRLDQPLEEKEVIKLVRSAYSENYQGANREYITILCKAWVSSDLTSKDLFVRQGWFKFKKKRSERQRVHLSEWKEDLMAYISEKSDVYKPYLVTTKKEIREALGIPERTLDKLLKVLKANQEIFFKIKSGRNGGIQLASGKSLLLSIIKVKKEEKESYIKALTNSFDLEHTFIQETLNKLAERPKTDTQLDLFSYDTG.

A DNA-binding region spans residues 120–141; sequence SDILTTAIDLGFMPTLIIKSDK.

Essential for replication. The sequence is that of Protein RepS (repS) from Streptococcus pyogenes.